Reading from the N-terminus, the 520-residue chain is Ribonuclease Y (520 aa).

The Extracellular segment spans residues 1–3 (MTP). The helical transmembrane segment at 4–24 (IMMVLISILLILLGLVVGYFV) threads the bilayer. Residues 25-520 (RKTIAEAKIA…RETRAVEYAK (496 aa)) lie on the Cytoplasmic side of the membrane. A coiled-coil region spans residues 29–141 (AEAKIAGARG…KVDEMIRMQQ (113 aa)). A KH domain is found at 210 to 273 (TVSVVNLPND…ETARIALDKL (64 aa)). Positions 336–429 (VLKHSMEVAF…VAAADALSAA (94 aa)) constitute an HD domain.

Belongs to the RNase Y family. Homodimer. Component of a possible RNA degradosome complex composed of rny, rnjA, rnjB, pnp, pfkA and eno (although rnjA and rnjB's presence is unclear). Interacts with RNA helicase CshA which may also be a member of the RNA degradosome complex. Interacts with full-length dynamin-like protein DynA. Mg(2+) is required as a cofactor. Mn(2+) serves as cofactor. It depends on Zn(2+) as a cofactor.

The protein resides in the cell membrane. Shows preference for transcripts carrying a monophosphate group at the 5' end. Functionally, endoribonuclease that initiates mRNA decay. Initiates the decay of all SAM-dependent riboswitches, such as yitJ riboswitch. Involved in processing of the gapA operon mRNA, it cleaves between cggR and gapA. Is also the decay-initiating endonuclease for rpsO mRNA. Involved in degradation of type I toxin-antitoxin system bsrG/SR4 RNAs and a minor role in degradation of type I toxin-antitoxin system bsrE/SR5 degradation. This Bacillus subtilis (strain 168) protein is Ribonuclease Y (rny).